Consider the following 355-residue polypeptide: Mitogen-activated protein kinase (355 aa).

Positions 23–311 (YDIQDVVGEG…VEEALKHPYL (289 aa)) constitute a Protein kinase domain. Residues 29 to 37 (VGEGAYGVV) and lysine 52 each bind ATP. Residue aspartate 147 is the Proton acceptor of the active site. Phosphothreonine is present on threonine 183. The short motif at 183–185 (TEY) is the TXY element. Tyrosine 185 is subject to Phosphotyrosine.

Belongs to the protein kinase superfamily. CMGC Ser/Thr protein kinase family. MAP kinase subfamily. Post-translationally, dually phosphorylated on Thr-183 and Tyr-185, which activates the enzyme.

It is found in the nucleus. It catalyses the reaction L-seryl-[protein] + ATP = O-phospho-L-seryl-[protein] + ADP + H(+). It carries out the reaction L-threonyl-[protein] + ATP = O-phospho-L-threonyl-[protein] + ADP + H(+). Activated by tyrosine and threonine phosphorylation. Responds to activation by environmental stress by phosphorylating downstream targets. In Fusarium vanettenii (Neocosmospora pisi), this protein is Mitogen-activated protein kinase (MAPK).